A 291-amino-acid polypeptide reads, in one-letter code: uncharacterized protein (291 aa).

The region spanning 68–205 (PVAVSASFLW…VIQLWARPRG (138 aa)) is the DAGKc domain.

This is an uncharacterized protein from Mycobacterium tuberculosis (strain CDC 1551 / Oshkosh).